We begin with the raw amino-acid sequence, 29 residues long: Cyclotide mang-A (29 aa).

The cyclopeptide (Gly-Asp) cross-link spans 1-29 (GFPTCGETCTLGTCNTPGCTCSWPICTRD). 3 disulfide bridges follow: cysteine 5–cysteine 19, cysteine 9–cysteine 21, and cysteine 14–cysteine 26.

It belongs to the cyclotide family. Moebius subfamily. In terms of processing, this is a cyclic peptide.

Probably participates in a plant defense mechanism. This chain is Cyclotide mang-A, found in Melicytus angustifolius (Hymenanthera angustifolia).